The primary structure comprises 543 residues: Headcase protein homolog (543 aa).

Disordered regions lie at residues 1–26 and 197–283; these read MPNP…QENG and MQDE…LSPA. Composition is skewed to basic and acidic residues over residues 197 to 211 and 235 to 250; these read MQDE…EKNT and PSHD…RQNS. Phosphoserine occurs at positions 264 and 268.

Expressed in all tissues examined. Highest levels are in the spleen, thymus, peripheral blood and heart. Lowest in the kidney and pancreas.

In terms of biological role, may play an important role in some human cancers. May be part of the regulatory mechanism in the development of epithelial tube networks such as the circulatory system and lungs. This Homo sapiens (Human) protein is Headcase protein homolog (HECA).